A 259-amino-acid polypeptide reads, in one-letter code: Probable WRKY transcription factor 65 (259 aa).

Residues 1–17 (MKRGLDMARSYNDHESS) show a composition bias toward basic and acidic residues. Disordered regions lie at residues 1–101 (MKRG…RCSS) and 126–165 (TSEHNHPWPLTSSTRNGPKPKPEPKPEPEPEVEPEAEEED). The span at 18-31 (QETGPESPNSSTFN) shows a compositional bias: polar residues. The span at 47-69 (RSVEKRVVNVPMKEMEGSRHKGD) shows a compositional bias: basic and acidic residues. Residues 68–134 (GDTTPPSDSW…YTSEHNHPWP (67 aa)) constitute a DNA-binding region (WRKY). Acidic residues predominate over residues 154–165 (EPEVEPEAEEED).

The protein resides in the nucleus. In terms of biological role, transcription factor. Interacts specifically with the W box (5'-(T)TGAC[CT]-3'), a frequently occurring elicitor-responsive cis-acting element. The polypeptide is Probable WRKY transcription factor 65 (WRKY65) (Arabidopsis thaliana (Mouse-ear cress)).